Here is a 329-residue protein sequence, read N- to C-terminus: 4-hydroxythreonine-4-phosphate dehydrogenase (329 aa).

H136 and T137 together coordinate substrate. 3 residues coordinate a divalent metal cation: H166, H211, and H266. Residues K274, N283, and R292 each contribute to the substrate site.

It belongs to the PdxA family. As to quaternary structure, homodimer. Zn(2+) is required as a cofactor. Mg(2+) serves as cofactor. It depends on Co(2+) as a cofactor.

Its subcellular location is the cytoplasm. It catalyses the reaction 4-(phosphooxy)-L-threonine + NAD(+) = 3-amino-2-oxopropyl phosphate + CO2 + NADH. Its pathway is cofactor biosynthesis; pyridoxine 5'-phosphate biosynthesis; pyridoxine 5'-phosphate from D-erythrose 4-phosphate: step 4/5. Functionally, catalyzes the NAD(P)-dependent oxidation of 4-(phosphooxy)-L-threonine (HTP) into 2-amino-3-oxo-4-(phosphooxy)butyric acid which spontaneously decarboxylates to form 3-amino-2-oxopropyl phosphate (AHAP). The polypeptide is 4-hydroxythreonine-4-phosphate dehydrogenase (Shigella boydii serotype 4 (strain Sb227)).